The chain runs to 39 residues: Ribonuclease UK114 (39 aa).

It belongs to the RutC family. In terms of assembly, monomer. In terms of processing, the N-terminus may be blocked. As to expression, mainly expressed in the liver and kidney. Lower expression found in intestine, gizzard, glandular stomach, heart, brain and spleen.

It localises to the cytoplasm. Functionally, endoribonuclease responsible for the inhibition of the translation by cleaving mRNA. Inhibits cell-free protein synthesis. Cleaves phosphodiester bonds only in single-stranded RNA. This chain is Ribonuclease UK114, found in Gallus gallus (Chicken).